Reading from the N-terminus, the 984-residue chain is Probable serine/threonine-protein kinase ireA (984 aa).

The N-terminal stretch at 1 to 26 is a signal peptide; the sequence is MTFSKTRNKIIFLLFLIIINIFNINA. Topologically, residues 27-436 are extracellular; sequence YIKDENEDDL…NDLLDSNKLK (410 aa). Disordered stretches follow at residues 70–91 and 137–157; these read YSTS…EITK and EDKS…DENK. 2 stretches are compositionally biased toward low complexity: residues 82-91 and 141-150; these read STSTSTEITK and STSSTSTTSE. N228 carries N-linked (GlcNAc...) asparagine glycosylation. A disordered region spans residues 352-427; the sequence is SPPSNNNNNN…GANNNNNNNN (76 aa). The span at 356–397 shows a compositional bias: low complexity; the sequence is NNNNNNNNNNNNNNNNNNNNNNNNNNNNNNNNNNKNNNNNNK. N398 carries an N-linked (GlcNAc...) asparagine glycan. The chain crosses the membrane as a helical span at residues 437–457; it reads NYDIYLYSSIVILITSIIVFI. Topologically, residues 458 to 984 are cytoplasmic; that stretch reads RSKKNFNLIN…NDQYFVQYYY (527 aa). Residues 467–533 are a coiled coil; it reads NVNNNNNQNN…NDLIDEFIST (67 aa). A compositionally biased stretch (low complexity) spans 472–489; it reads NNQNNNQNSNQNNNINNK. Residues 472-518 form a disordered region; sequence NNQNNNQNSNQNNNINNKKTPKKKKKKQKNKNNKNNNDEDDENEIEN. Residues 490-503 show a composition bias toward basic residues; sequence KTPKKKKKKQKNKN. The span at 509–518 shows a compositional bias: acidic residues; that stretch reads DEDDENEIEN. The 277-residue stretch at 575–851 folds into the Protein kinase domain; it reads IITNKILGTG…IGECINHPFF (277 aa). ATP is bound by residues 581–589 and K603; that span reads LGTGSCGTI. A compositionally biased stretch (polar residues) spans 667-676; it reads PTDSPSIQSS. The segment at 667 to 692 is disordered; sequence PTDSPSIQSSNNNGNGNNGNNNNNNQ. Low complexity predominate over residues 677-691; the sequence is NNNGNGNNGNNNNNN. Residue D722 is the Proton acceptor of the active site. In terms of domain architecture, KEN spans 854-984; that stretch reads VHKKLSFLVA…NDQYFVQYYY (131 aa).

This sequence belongs to the protein kinase superfamily. Ser/Thr protein kinase family.

It is found in the membrane. It catalyses the reaction L-seryl-[protein] + ATP = O-phospho-L-seryl-[protein] + ADP + H(+). The enzyme catalyses L-threonyl-[protein] + ATP = O-phospho-L-threonyl-[protein] + ADP + H(+). This is Probable serine/threonine-protein kinase ireA (ireA) from Dictyostelium discoideum (Social amoeba).